The sequence spans 78 residues: uncharacterized protein (78 aa).

Helical transmembrane passes span 13–35 and 50–72; these read AGVG…PTGI and GTTF…FYYF.

Its subcellular location is the cell membrane. This is an uncharacterized protein from Pasteurella multocida (strain Pm70).